Reading from the N-terminus, the 487-residue chain is Betaine aldehyde dehydrogenase (487 aa).

Residues Ile27 and Asp93 each contribute to the K(+) site. 149-151 (GAW) is an NAD(+) binding site. The active-site Charge relay system is Lys161. NAD(+) contacts are provided by residues 175–178 (KPSE) and 228–231 (SVPT). Leu243 serves as a coordination point for K(+). Residue Glu249 is the Proton acceptor of the active site. 3 residues coordinate NAD(+): Gly251, Cys283, and Glu384. Cys283 acts as the Nucleophile in catalysis. A Cysteine sulfenic acid (-SOH) modification is found at Cys283. K(+) contacts are provided by Lys454 and Gly457. The active-site Charge relay system is the Glu461.

The protein belongs to the aldehyde dehydrogenase family. In terms of assembly, dimer of dimers. The cofactor is K(+).

The enzyme catalyses betaine aldehyde + NAD(+) + H2O = glycine betaine + NADH + 2 H(+). The protein operates within amine and polyamine biosynthesis; betaine biosynthesis via choline pathway; betaine from betaine aldehyde: step 1/1. Functionally, involved in the biosynthesis of the osmoprotectant glycine betaine. Catalyzes the irreversible oxidation of betaine aldehyde to the corresponding acid. This chain is Betaine aldehyde dehydrogenase, found in Brucella anthropi (strain ATCC 49188 / DSM 6882 / CCUG 24695 / JCM 21032 / LMG 3331 / NBRC 15819 / NCTC 12168 / Alc 37) (Ochrobactrum anthropi).